The sequence spans 288 residues: uncharacterized protein (288 aa).

Positions 1–12 (MTEGRCAQHPDG) are enriched in basic and acidic residues. The tract at residues 1–20 (MTEGRCAQHPDGLDVQDVCD) is disordered.

This sequence belongs to the class IV-like SAM-binding methyltransferase superfamily. RNA methyltransferase TrmH family.

This is an uncharacterized protein from Mycobacterium tuberculosis (strain ATCC 25618 / H37Rv).